Here is a 487-residue protein sequence, read N- to C-terminus: Alpha-1,4-L-rhamnosidase (487 aa).

Residues 1 to 30 (MKNKKRLCHILKYIITCFLFGVIFIIPIQA) form the signal peptide. Glu-199 acts as the Proton donor in catalysis.

It belongs to the glycosyl hydrolase 39 family.

Its subcellular location is the periplasm. Alpha-rhamnosidase involved in ulvan degradation. Ulvan is the main polysaccharide component of the Ulvales (green seaweed) cell wall. It is composed of disaccharide building blocks comprising 3-sulfated rhamnose (Rha3S) linked to D-glucuronic acid (GlcA), L-iduronic acid (IduA), or D-xylose (Xyl). Endo-acting alpha-1,4-L-rhamnosidase cleaves rhamnose sections interspersed between xylose residues within the polymer, degrading larger oligomers with consecutive Xyl-Rha3S units that are resistant to the ulvan lyases and producing dimers Xyl-Rha3S and Xyl2S-Rha3S as the smallest products. The polypeptide is Alpha-1,4-L-rhamnosidase (Formosa agariphila (strain DSM 15362 / KCTC 12365 / LMG 23005 / KMM 3901 / M-2Alg 35-1)).